Reading from the N-terminus, the 240-residue chain is Probable septum site-determining protein MinC (240 aa).

It belongs to the MinC family. As to quaternary structure, interacts with MinD and FtsZ.

In terms of biological role, cell division inhibitor that blocks the formation of polar Z ring septums. Rapidly oscillates between the poles of the cell to destabilize FtsZ filaments that have formed before they mature into polar Z rings. Prevents FtsZ polymerization. This Acinetobacter baumannii (strain ATCC 17978 / DSM 105126 / CIP 53.77 / LMG 1025 / NCDC KC755 / 5377) protein is Probable septum site-determining protein MinC.